A 268-amino-acid chain; its full sequence is Homeobox protein CDX-1 (268 aa).

The tract at residues 1-152 is disordered; sequence MYVGYVLDKD…AGGGGSGKTR (152 aa). Pro residues-rich tracts occupy residues 29 to 42 and 54 to 67; these read TYAP…PPQY and APAP…PFPA. Positions 73–91 are enriched in low complexity; that stretch reads AAAYGPGPTASAASPAPLA. Over residues 92 to 108 the composition is skewed to pro residues; sequence FGPPPDFSPVPAPPGPG. Low complexity predominate over residues 115–128; sequence SLGAPGAPSSPGAP. The homeobox DNA-binding region spans 154-213; sequence KDKYRVVYTDHQRLELEKEFHYSRYITIRRKSELAANLGLTERQVKIWFQNRRAKERKVN. The interval 157 to 178 is interaction with DNA; that stretch reads YRVVYTDHQRLELEKEFHYSRY. The interval 196 to 207 is interaction with 5-mCpG DNA; sequence RQVKIWFQNRRA. Residues 209–268 are disordered; sequence ERKVNKKKQQQQQPLPPTQLPLPLDGTPTPSGPPLGSLCPTNAGLLGTPSPVPVKEEFLP. The span at 229–246 shows a compositional bias: low complexity; sequence PLPLDGTPTPSGPPLGSL.

It belongs to the Caudal homeobox family. As to expression, intestinal epithelium.

It localises to the nucleus. Functionally, plays a role in transcriptional regulation. Involved in activated KRAS-mediated transcriptional activation of PRKD1 in colorectal cancer (CRC) cells. Binds to the PRKD1 promoter in colorectal cancer (CRC) cells. Could play a role in the terminal differentiation of the intestine. Binds preferentially to methylated DNA. The polypeptide is Homeobox protein CDX-1 (Cdx1) (Mus musculus (Mouse)).